The sequence spans 547 residues: Chaperonin GroEL (547 aa).

Residues 30 to 33 (TLGP), Lys51, 87 to 91 (DGTTT), Gly415, and Asp495 contribute to the ATP site. A disordered region spans residues 526–547 (KKDTPVPPMPGGGMGGMGGMDF). Gly residues predominate over residues 536–547 (GGGMGGMGGMDF).

The protein belongs to the chaperonin (HSP60) family. In terms of assembly, forms a cylinder of 14 subunits composed of two heptameric rings stacked back-to-back. Interacts with the co-chaperonin GroES.

The protein localises to the cytoplasm. The catalysed reaction is ATP + H2O + a folded polypeptide = ADP + phosphate + an unfolded polypeptide.. Together with its co-chaperonin GroES, plays an essential role in assisting protein folding. The GroEL-GroES system forms a nano-cage that allows encapsulation of the non-native substrate proteins and provides a physical environment optimized to promote and accelerate protein folding. The polypeptide is Chaperonin GroEL (Bartonella henselae (strain ATCC 49882 / DSM 28221 / CCUG 30454 / Houston 1) (Rochalimaea henselae)).